A 401-amino-acid polypeptide reads, in one-letter code: MVAGINLMQETKSIRDVEIEGKRVLIRVDFNVPMDSDFNISDDTRIREAIPTINHCIDNGAKSIVLVSHLGRPRGKSSEFSLKHILKRLERLLNRSVIFVESLEGVSSVMATLPQKSVILLENIRFLEGEEKNDEKLSKNLASLCDIYINDAFGASHRKHASTYGVAKFAPVKVAGLLLKKEIDSFAKALASPLKPVLLIVGGSKVSSKITLLSNILDVVDKIVIGGAMSNTFLKSLGYDMQRSLVEDPLVPEAAKILGLAKQKGVKIYLPVDVVCTDDIKNPKEIKITPAQDVPENFLAADIGPASVKLFGEVIRDCETIIWNGPMGVYEVQNFSRGTFQLAHVVADTYAYSVIGGGDTADAIDRAGEKDNMSFTSTGGGASLELLEGKILPAFEVLERK.

Substrate-binding positions include 29–31, Arg45, 69–72, Arg125, and Arg158; these read DFN and HLGR. ATP is bound by residues Lys209, Glu331, and 357–360; that span reads GGDT.

It belongs to the phosphoglycerate kinase family. Monomer.

It is found in the cytoplasm. It catalyses the reaction (2R)-3-phosphoglycerate + ATP = (2R)-3-phospho-glyceroyl phosphate + ADP. It functions in the pathway carbohydrate degradation; glycolysis; pyruvate from D-glyceraldehyde 3-phosphate: step 2/5. This Wolinella succinogenes (strain ATCC 29543 / DSM 1740 / CCUG 13145 / JCM 31913 / LMG 7466 / NCTC 11488 / FDC 602W) (Vibrio succinogenes) protein is Phosphoglycerate kinase.